A 461-amino-acid chain; its full sequence is Photosystem II CP43 reaction center protein (461 aa).

Residues 1–2 constitute a propeptide that is removed on maturation; sequence ME. N-acetylthreonine is present on T3. Phosphothreonine is present on T3. 5 helical membrane-spanning segments follow: residues 57–81, 122–143, 166–188, 243–263, and 279–300; these read LFEVAHFVPEKPMYEQGLILLPHIA, LIGPETLEESFPFFGYIWKDKN, KAMYFGGVYDTWAAGGGDVRIIS, KPWGWARRAFVWSGEAYLSYS, and WFNNTAYPSEFYGPTGPEASQA. Residue E355 coordinates [CaMn4O5] cluster. The helical transmembrane segment at 435-459 threads the bilayer; the sequence is RARAAAAGFEKGIDRDTEPVLSMKP.

This sequence belongs to the PsbB/PsbC family. PsbC subfamily. As to quaternary structure, PSII is composed of 1 copy each of membrane proteins PsbA, PsbB, PsbC, PsbD, PsbE, PsbF, PsbH, PsbI, PsbJ, PsbK, PsbL, PsbM, PsbT, PsbX, PsbY, PsbZ, Psb30/Ycf12, at least 3 peripheral proteins of the oxygen-evolving complex and a large number of cofactors. It forms dimeric complexes. Binds multiple chlorophylls and provides some of the ligands for the Ca-4Mn-5O cluster of the oxygen-evolving complex. It may also provide a ligand for a Cl- that is required for oxygen evolution. PSII binds additional chlorophylls, carotenoids and specific lipids. serves as cofactor.

The protein resides in the plastid. It localises to the chloroplast thylakoid membrane. Its function is as follows. One of the components of the core complex of photosystem II (PSII). It binds chlorophyll and helps catalyze the primary light-induced photochemical processes of PSII. PSII is a light-driven water:plastoquinone oxidoreductase, using light energy to abstract electrons from H(2)O, generating O(2) and a proton gradient subsequently used for ATP formation. The protein is Photosystem II CP43 reaction center protein of Oltmannsiellopsis viridis (Marine flagellate).